A 451-amino-acid chain; its full sequence is Penicillin-binding protein 4* (451 aa).

Ser61 serves as the catalytic Acyl-ester intermediate.

The protein belongs to the beta-lactamase family.

It is found in the forespore outer membrane. It participates in cell wall biogenesis; peptidoglycan biosynthesis. Probably involved in peptidoglycan modification during cortex synthesis. In Bacillus subtilis (strain 168), this protein is Penicillin-binding protein 4* (pbpE).